Reading from the N-terminus, the 431-residue chain is SH2 domain-containing protein 4B (431 aa).

The tract at residues Q201–Y235 is disordered. Residues E211 to Y235 show a composition bias toward basic and acidic residues. The 93-residue stretch at W325–C417 folds into the SH2 domain.

This chain is SH2 domain-containing protein 4B (Sh2d4b), found in Mus musculus (Mouse).